The sequence spans 339 residues: Protein RETICULATA-RELATED 2, chloroplastic (339 aa).

Residues 1–58 constitute a chloroplast transit peptide; the sequence is MAAMAAKLHISTKSDQSNVRLPRLINLSRDPTARVLFPRNGSVSSLHTNFSSPNIMVP. The span at 68–86 shows a compositional bias: gly residues; it reads IGNHGGGSGSGGGGGGYGG. The tract at residues 68-92 is disordered; it reads IGNHGGGSGSGGGGGGYGGSEEEES. The next 2 membrane-spanning stretches (helical) occupy residues 148 to 168 and 213 to 233; these read FVFSTLVVGSILNFTLMYLLA and VFATVGLAAGLVGTAISNGLI.

Belongs to the RETICULATA family.

The protein resides in the plastid. It localises to the chloroplast membrane. In terms of biological role, may play a role in leaf development. The protein is Protein RETICULATA-RELATED 2, chloroplastic of Arabidopsis thaliana (Mouse-ear cress).